Reading from the N-terminus, the 86-residue chain is Venom metalloproteinase (86 aa).

Aspartate 7 lines the Ca(2+) pocket. Zn(2+) is bound at residue histidine 67. The active site involves glutamate 68. Residues histidine 71 and histidine 77 each coordinate Zn(2+).

Belongs to the venom metalloproteinase (M12B) family. The cofactor is Zn(2+). Expressed by the venom gland.

Its subcellular location is the secreted. The polypeptide is Venom metalloproteinase (Tityus serrulatus (Brazilian scorpion)).